Consider the following 496-residue polypeptide: Glutamate--tRNA ligase (496 aa).

A 'HIGH' region motif is present at residues 11 to 21 (PSPTGLLHIGN). Positions 255–259 (KLSKR) match the 'KMSKS' region motif. Residue Lys258 coordinates ATP.

It belongs to the class-I aminoacyl-tRNA synthetase family. Glutamate--tRNA ligase type 1 subfamily. In terms of assembly, monomer.

It is found in the cytoplasm. It carries out the reaction tRNA(Glu) + L-glutamate + ATP = L-glutamyl-tRNA(Glu) + AMP + diphosphate. Its function is as follows. Catalyzes the attachment of glutamate to tRNA(Glu) in a two-step reaction: glutamate is first activated by ATP to form Glu-AMP and then transferred to the acceptor end of tRNA(Glu). The protein is Glutamate--tRNA ligase of Streptococcus pyogenes serotype M49 (strain NZ131).